A 75-amino-acid polypeptide reads, in one-letter code: U6-lycotoxin-Ls1h (75 aa).

The first 21 residues, 1–21, serve as a signal peptide directing secretion; that stretch reads MKLLLFTALVLVVISLIEVEA. Residues 22-25 constitute a propeptide that is removed on maturation; sequence ENER.

This sequence belongs to the neurotoxin 19 (CSTX) family. 06 (U6-Lctx) subfamily. Post-translationally, contains 4 disulfide bonds. As to expression, expressed by the venom gland.

The protein resides in the secreted. The polypeptide is U6-lycotoxin-Ls1h (Lycosa singoriensis (Wolf spider)).